Here is a 241-residue protein sequence, read N- to C-terminus: Large ribosomal subunit protein bL25 (241 aa).

Residues Leu214–Gln241 form a disordered region.

It belongs to the bacterial ribosomal protein bL25 family. CTC subfamily. As to quaternary structure, part of the 50S ribosomal subunit; part of the 5S rRNA/L5/L18/L25 subcomplex. Contacts the 5S rRNA. Binds to the 5S rRNA independently of L5 and L18.

Functionally, this is one of the proteins that binds to the 5S RNA in the ribosome where it forms part of the central protuberance. The sequence is that of Large ribosomal subunit protein bL25 from Deinococcus geothermalis (strain DSM 11300 / CIP 105573 / AG-3a).